Consider the following 223-residue polypeptide: DNA mismatch repair protein MutH (223 aa).

This sequence belongs to the MutH family.

The protein resides in the cytoplasm. Sequence-specific endonuclease that cleaves unmethylated GATC sequences. It is involved in DNA mismatch repair. This Haemophilus influenzae (strain PittGG) protein is DNA mismatch repair protein MutH.